A 223-amino-acid chain; its full sequence is Ubiquinone biosynthesis protein COQ4 homolog 2, mitochondrial (223 aa).

The transit peptide at 1–26 (MFLRRVHPVRLGHAIQRSLTTTKSRN) directs the protein to the mitochondrion. Residues 21-32 (TTKSRNESTTTT) are compositionally biased toward low complexity. The interval 21 to 43 (TTKSRNESTTTTVEAPQAVPSPP) is disordered. Zn(2+)-binding residues include His-177, Asp-178, His-181, and Glu-193.

This sequence belongs to the COQ4 family. Component of a multi-subunit COQ enzyme complex. Zn(2+) is required as a cofactor.

Its subcellular location is the mitochondrion inner membrane. It catalyses the reaction a 4-hydroxy-3-methoxy-5-(all-trans-polyprenyl)benzoate + H(+) = a 2-methoxy-6-(all-trans-polyprenyl)phenol + CO2. Its pathway is cofactor biosynthesis; ubiquinone biosynthesis. In terms of biological role, lyase that catalyzes the C1-decarboxylation of 4-hydroxy-3-methoxy-5-(all-trans-polyprenyl)benzoic acid into 2-methoxy-6-(all-trans-polyprenyl)phenol during ubiquinone biosynthesis. The chain is Ubiquinone biosynthesis protein COQ4 homolog 2, mitochondrial from Culex quinquefasciatus (Southern house mosquito).